A 429-amino-acid chain; its full sequence is MAVWALGINHSTAPLDLRGRFAFALDQIAPRLQGLRQSLSSHPGVETAMLSTCNRTEIYCAAEQAAIDHTLGWLAHSGGVSTALLRAHSYTLQDSRAARHAFRVASGLDSMVLGEAQILGQMKDAVRAAETAGVLGSTLNQLFQRSFAVAKEVRSSTEIGAHSISMAAAAVRLAGQLFEDLSQIRVLFVGAGAMIALCATHFAAKNPLGLALANRTLERGEQLAARFGATVLRLADLPERLHEFDAVISCTASSLPIIGLGAVERALKKRRHRPMFMVDLAVPRDIEPEVKALGDVYLYTVDDLASVVQTGQASRQAAVAQAEAIIDAGVQSFMHWLAQRNPVGGVVPLIRQLNAQTEVWRASEIARAKKLLAKGEAPDAVLDALARGLTQKMLHGTMAELRAGDADMRAQTAQTVARLFLRAQSNHDL.

Substrate-binding positions include 52-55, Ser110, 115-117, and Gln121; these read TCNR and EAQ. The Nucleophile role is filled by Cys53. 190–195 is an NADP(+) binding site; it reads GAGAMI.

Belongs to the glutamyl-tRNA reductase family. Homodimer.

It catalyses the reaction (S)-4-amino-5-oxopentanoate + tRNA(Glu) + NADP(+) = L-glutamyl-tRNA(Glu) + NADPH + H(+). Its pathway is porphyrin-containing compound metabolism; protoporphyrin-IX biosynthesis; 5-aminolevulinate from L-glutamyl-tRNA(Glu): step 1/2. Catalyzes the NADPH-dependent reduction of glutamyl-tRNA(Glu) to glutamate 1-semialdehyde (GSA). This Verminephrobacter eiseniae (strain EF01-2) protein is Glutamyl-tRNA reductase.